The following is a 215-amino-acid chain: MRLVFLGAPGAGKGTQAKRLVEKYGIPQISTGDLLRAAVAAGTPLGKEAKAYMDRGELVPDKVVLGMVKERLSQNDCKKGFILDGFPRNVAQAEALDKMLSEMNMPLDLALNLDVPFDDLMKRLTGRRTCKSCGQMYNVYYSPSKVEGKCDKCGGELFQRDDDKEETIRKRLEVYRAQTEPLIDYYSKKGILKSVSGTGSIDEIFNSICAILEKK.

10 to 15 (GAGKGT) provides a ligand contact to ATP. Positions 30–59 (STGDLLRAAVAAGTPLGKEAKAYMDRGELV) are NMP. AMP is bound by residues Thr-31, Arg-36, 57–59 (ELV), 85–88 (GFPR), and Gln-92. The tract at residues 126–163 (GRRTCKSCGQMYNVYYSPSKVEGKCDKCGGELFQRDDD) is LID. Arg-127 provides a ligand contact to ATP. The Zn(2+) site is built by Cys-130, Cys-133, Cys-150, and Cys-153. AMP is bound by residues Arg-160 and Arg-171. Gly-199 contacts ATP.

It belongs to the adenylate kinase family. As to quaternary structure, monomer.

Its subcellular location is the cytoplasm. It catalyses the reaction AMP + ATP = 2 ADP. It functions in the pathway purine metabolism; AMP biosynthesis via salvage pathway; AMP from ADP: step 1/1. Catalyzes the reversible transfer of the terminal phosphate group between ATP and AMP. Plays an important role in cellular energy homeostasis and in adenine nucleotide metabolism. This Thermodesulfovibrio yellowstonii (strain ATCC 51303 / DSM 11347 / YP87) protein is Adenylate kinase.